We begin with the raw amino-acid sequence, 445 residues long: Cytochrome P450 monooxygenase penB (445 aa).

Residue cysteine 381 coordinates heme.

It belongs to the cytochrome P450 family. Requires heme as cofactor.

Its pathway is secondary metabolite biosynthesis. It functions in the pathway alkaloid biosynthesis. It participates in mycotoxin biosynthesis. Its function is as follows. Cytochrome P450 monooxygenase; part of the gene cluster that mediates the biosynthesis of penigequinolones, potent insecticidal alkaloids that contain a highly modified 10-carbon prenyl group. The first stage is catalyzed by the nonribosomal peptide synthetase penN that condenses anthranilic acid and O-methyl-L-tyrosine to produce 4'-methoxycyclopeptin. 4'-methoxycyclopeptin is then converted to 4'-methoxydehydrocyclopeptin by the ketoglutarate-dependent dioxygenase penM through dehydrogenation to form a double bond between C-alpha and C-beta of the O-methyltyrosine side chain. PenM also converts its first product methoxydehydrocyclopeptin to 4'-methoxycyclopenin. The following conversion of 4'methoxycyclopenin into 4'-methoxyviridicatin is catalyzed by the cyclopenase penL. 4'-methoxyviridicatin is the precursor of quinolone natural products, and is further converted to quinolinone B. The prenyltransferase penI then catalyzes the canonical Friedel-Crafts alkylation of quinolinone B with dimethylallyl cation to yield dimethylallyl quinolone, which is subjected to FAD-dependent dehydrogenation by the FAD-linked oxidoreductase penH to yield conjugated aryl diene. The delta(3') double bond then serves as the site of the second alkylation with DMAPP catalyzed by the prenyltransferase penG to yield a carbenium ion intermediate, which can be attacked by H(2)O to yield a styrenyl quinolone containing a C3'-hydroxyprenyl chain, or undergo cyclization to yield yaequinolones J1 and J2. The conversion of the styrenyl quinolone into the tetrahydrofuran-containing yaequinolone C is performed by the FAD-dependent monooxygenase penE and involves epoxidation of the terminal C7'-C8' olefin, followed by epoxide ring opening initiated by the C3' hydroxyl group. The predicted cysteine hydrolase penJ acts as an epoxide hydrolase that enhances the rate of the 5-exo-tet cyclization step, increasing the yield of yaequinolone C. PenF catalyzes the cationic rearrangement of the epoxide formed by penE (before ring opening to produce yaequinolone C) into yaequinolone D. Finally, the short-chain dehydrogenase/reductase (SDR)-like reductase penD, catalyzes both the dehydration of yaequinolone D and the reduction of the resulting oxonium to yield penigequinolone. The sequence is that of Cytochrome P450 monooxygenase penB from Penicillium thymicola.